Consider the following 293-residue polypeptide: Lipoyl synthase (293 aa).

[4Fe-4S] cluster contacts are provided by C47, C52, C58, C73, C77, C80, and S285. A Radical SAM core domain is found at 59 to 274 (WSEGTATFMI…EKIGLELGFR (216 aa)).

The protein belongs to the radical SAM superfamily. Lipoyl synthase family. The cofactor is [4Fe-4S] cluster.

The protein resides in the cytoplasm. The catalysed reaction is [[Fe-S] cluster scaffold protein carrying a second [4Fe-4S](2+) cluster] + N(6)-octanoyl-L-lysyl-[protein] + 2 oxidized [2Fe-2S]-[ferredoxin] + 2 S-adenosyl-L-methionine + 4 H(+) = [[Fe-S] cluster scaffold protein] + N(6)-[(R)-dihydrolipoyl]-L-lysyl-[protein] + 4 Fe(3+) + 2 hydrogen sulfide + 2 5'-deoxyadenosine + 2 L-methionine + 2 reduced [2Fe-2S]-[ferredoxin]. Its pathway is protein modification; protein lipoylation via endogenous pathway; protein N(6)-(lipoyl)lysine from octanoyl-[acyl-carrier-protein]: step 2/2. Functionally, catalyzes the radical-mediated insertion of two sulfur atoms into the C-6 and C-8 positions of the octanoyl moiety bound to the lipoyl domains of lipoate-dependent enzymes, thereby converting the octanoylated domains into lipoylated derivatives. This Christiangramia forsetii (strain DSM 17595 / CGMCC 1.15422 / KT0803) (Gramella forsetii) protein is Lipoyl synthase.